The sequence spans 787 residues: GPI ethanolamine phosphate transferase 2 (787 aa).

N33, N185, and N397 each carry an N-linked (GlcNAc...) asparagine glycan. The next 3 helical transmembrane spans lie at 400 to 420, 426 to 446, and 455 to 475; these read FLTY…VWNF, YIEH…SSFI, and WITI…LVVL. N-linked (GlcNAc...) asparagine glycosylation is present at N485. 2 helical membrane-spanning segments follow: residues 504–524 and 536–556; these read HTSV…FPFL and LLSV…FAIV. A glycan (N-linked (GlcNAc...) asparagine) is linked at N581. A helical transmembrane segment spans residues 591–611; that stretch reads LVPIARIFFQICGVSIIILLF. N617 carries N-linked (GlcNAc...) asparagine glycosylation. Residues 629–651 form a helical membrane-spanning segment; that stretch reads VIKFVLLLQTSSANIPLFLIFEI. The N-linked (GlcNAc...) asparagine glycan is linked to N669. 4 helical membrane passes run 671–693, 699–719, 740–760, and 767–787; these read TFFQ…YNGV, IYVV…YWAL, GTCL…WSVF, and YAAW…LGVL.

The protein belongs to the PIGG/PIGN/PIGO family. PIGG subfamily.

It is found in the endoplasmic reticulum membrane. Its pathway is glycolipid biosynthesis; glycosylphosphatidylinositol-anchor biosynthesis. Its function is as follows. Ethanolamine phosphate transferase involved in glycosylphosphatidylinositol-anchor biosynthesis. Transfers ethanolamine phosphate to the GPI second mannose. The protein is GPI ethanolamine phosphate transferase 2 (LAS21) of Kluyveromyces lactis (strain ATCC 8585 / CBS 2359 / DSM 70799 / NBRC 1267 / NRRL Y-1140 / WM37) (Yeast).